A 139-amino-acid polypeptide reads, in one-letter code: Large ribosomal subunit protein uL16c (139 aa).

Basic residues predominate over residues M1–M17. Residues M1–K23 are disordered.

Belongs to the universal ribosomal protein uL16 family. As to quaternary structure, part of the 50S ribosomal subunit.

It localises to the plastid. Its subcellular location is the chloroplast. In Pyropia yezoensis (Susabi-nori), this protein is Large ribosomal subunit protein uL16c.